Here is a 225-residue protein sequence, read N- to C-terminus: Biosynthetic peptidoglycan transglycosylase (225 aa).

The chain crosses the membrane as a helical span at residues 8-28 (VLLIFIGAILFIQLWIFSSLV).

This sequence belongs to the glycosyltransferase 51 family.

It localises to the cell inner membrane. It carries out the reaction [GlcNAc-(1-&gt;4)-Mur2Ac(oyl-L-Ala-gamma-D-Glu-L-Lys-D-Ala-D-Ala)](n)-di-trans,octa-cis-undecaprenyl diphosphate + beta-D-GlcNAc-(1-&gt;4)-Mur2Ac(oyl-L-Ala-gamma-D-Glu-L-Lys-D-Ala-D-Ala)-di-trans,octa-cis-undecaprenyl diphosphate = [GlcNAc-(1-&gt;4)-Mur2Ac(oyl-L-Ala-gamma-D-Glu-L-Lys-D-Ala-D-Ala)](n+1)-di-trans,octa-cis-undecaprenyl diphosphate + di-trans,octa-cis-undecaprenyl diphosphate + H(+). Its pathway is cell wall biogenesis; peptidoglycan biosynthesis. Functionally, peptidoglycan polymerase that catalyzes glycan chain elongation from lipid-linked precursors. This is Biosynthetic peptidoglycan transglycosylase from Acinetobacter baumannii (strain ATCC 17978 / DSM 105126 / CIP 53.77 / LMG 1025 / NCDC KC755 / 5377).